The following is a 125-amino-acid chain: Cu-Zn superoxide dismutase-like protein OPG175 (125 aa).

A disulfide bridge links Cys-52 with Cys-102.

The protein belongs to the Cu-Zn superoxide dismutase family.

It localises to the virion. It is found in the host cytoplasm. In terms of biological role, superoxide dismutase-like protein with no enzymatic activity. The polypeptide is Cu-Zn superoxide dismutase-like protein OPG175 (OPG175) (Monkeypox virus).